Consider the following 214-residue polypeptide: Transcriptional activator protein ExaE (214 aa).

The Response regulatory domain maps to 2-118 (GILLVDDHPM…VVLEAVRRVL (117 aa)). Asp-53 bears the 4-aspartylphosphate mark. An HTH luxR-type domain is found at 143–208 (GNARLQGLTQ…ELVHLAIEAG (66 aa)). Residues 167–186 (TRLIAQQLCISAKTVSNYLT) constitute a DNA-binding region (H-T-H motif).

In terms of biological role, positive regulator of the expression of the gene qedA and the activity of ADH I but does not affect the activities of ADH IIB or ADH IIG. The chain is Transcriptional activator protein ExaE from Pseudomonas putida (Arthrobacter siderocapsulatus).